The primary structure comprises 88 residues: Large ribosomal subunit protein bL31 (88 aa).

The interval 67 to 88 (MGSVDNATSEKKSATDETSKES) is disordered. Residues 74–88 (TSEKKSATDETSKES) show a composition bias toward basic and acidic residues.

The protein belongs to the bacterial ribosomal protein bL31 family. Type A subfamily. Part of the 50S ribosomal subunit.

Its function is as follows. Binds the 23S rRNA. In Synechococcus sp. (strain CC9311), this protein is Large ribosomal subunit protein bL31.